Reading from the N-terminus, the 246-residue chain is MSSSSSSPFPQAMKNGEYRNWAELPPELTSSILLRLGAIEILQNAQRVCKSWRRVCQDPSMWRKIDIRIKENLVNSVELFYVIEPLCCRAVDLSQGGLLEINIDYLVNTSFLNYIADRSSNLRRLGVVDCAPVLSRGVVEAAMKLPLLEELDITYKSSIREQELKVVGQSCPNLRTLKLNCTGDVKCCDKVALAIAETMPGLRHLQLFRNGLSETGLNAILEGCPHLKNLGLHQCLNINIVGDIVK.

The F-box domain maps to 18-65 (YRNWAELPPELTSSILLRLGAIEILQNAQRVCKSWRRVCQDPSMWRKI).

The chain is Putative F-box/LRR-repeat protein 9 (FBL9) from Arabidopsis thaliana (Mouse-ear cress).